Consider the following 228-residue polypeptide: tRNA (carboxymethyluridine(34)-5-O)-methyltransferase (228 aa).

It is found in the cytoplasm. The protein resides in the nucleus. It catalyses the reaction 5-(carboxymethyl)uridine(34) in tRNA + S-adenosyl-L-methionine = 5-(2-methoxy-2-oxoethyl)uridine(34) in tRNA + S-adenosyl-L-homocysteine. In terms of biological role, required for the methylation of the wobble bases at position 34 in tRNA. Appears to have a role in stress-response. The sequence is that of tRNA (carboxymethyluridine(34)-5-O)-methyltransferase (trm9) from Schizosaccharomyces pombe (strain 972 / ATCC 24843) (Fission yeast).